The following is a 212-amino-acid chain: Glutathione S-transferase P 1 (212 aa).

One can recognise a GST N-terminal domain in the interval 2 to 83 (PGYVLTYFPV…YLGNKHGLTG (82 aa)). Glutathione-binding positions include Tyr8, Arg14, Trp39, Lys47, 54–55 (QL), and 67–68 (QS). One can recognise a GST C-terminal domain in the interval 85–206 (NDEERGHIDM…KSDARNKRPI (122 aa)).

Belongs to the GST superfamily. Pi family. As to quaternary structure, homodimer. Expressed only in embryos. Not expressed in liver, lung, heart, kidney and ovary.

The protein resides in the cytoplasm. It is found in the mitochondrion. It localises to the nucleus. The catalysed reaction is RX + glutathione = an S-substituted glutathione + a halide anion + H(+). Its function is as follows. Conjugation of reduced glutathione to a wide number of exogenous and endogenous hydrophobic electrophiles. Highly active towards 1-chloro-2,4-dinitrobenzene and organic isothiocyanates, but shows no detectable activity towards 1,2-dichloro-4-nitrobenzene, p-nitrobenzylchloride, trans-4-phenyl-3-buten-2-one (tPBO) and ethacrynic acid. May be associated with cellular proliferation. The polypeptide is Glutathione S-transferase P 1 (gstp1) (Xenopus laevis (African clawed frog)).